We begin with the raw amino-acid sequence, 281 residues long: MSTYLVGDVHGCLVELKALLAQVSFNPEQDTLWLTGDLVARGPDSLQVLRFVRSLGSSVRMVLGNHDLHLLAVYAGISRNKPKDRLNDLLTAPDADELINWLRRQPILQVDEDLKLVMAHAGITPQWDLPTALVCAREVESILSSDSYPLFLDAMYGDMPNHWSPELSGLARLRFSTNVFTRMRYCFSGGQLDMLCKEQPGQAPSLLKPWFDLPSQVAGEYAIAFGHWASLEGKGTPENIYALDTGCCWGGELTMLRWDDKRYFTQPSLSSNTELSGDITL.

This sequence belongs to the Ap4A hydrolase family.

The catalysed reaction is P(1),P(4)-bis(5'-adenosyl) tetraphosphate + H2O = 2 ADP + 2 H(+). Functionally, hydrolyzes diadenosine 5',5'''-P1,P4-tetraphosphate to yield ADP. This is Bis(5'-nucleosyl)-tetraphosphatase, symmetrical from Pectobacterium atrosepticum (strain SCRI 1043 / ATCC BAA-672) (Erwinia carotovora subsp. atroseptica).